The chain runs to 669 residues: Hypoxia-inducible factor 3-alpha (669 aa).

Residues 1-27 (MALGLQRARSTTELRKEKSRDAARSRR) are disordered. Residues 10-27 (STTELRKEKSRDAARSRR) show a composition bias toward basic and acidic residues. Residues 14–67 (LRKEKSRDAARSRRSQETEVLYQLAHTLPFARGVSAHLDKASIMRLTISYLRMH) form the bHLH domain. A nuclear localization signal region spans residues 77-100 (QVGAGGEPLDACYLKALEGFVMVL). 2 PAS domains span residues 82 to 154 (GEPL…LSRR) and 227 to 297 (PHPG…LSKG). The tract at residues 230 to 274 (GSLEPPLGRGAFLSRHSLDMKFTYCDDRIAEVAGYSPDDLIGCSA) is nuclear export signal. The segment at 354-389 (EQTEQHSRRPIQRGAPSQKDTPNPGDSLDTPGPRIL) is disordered. An LRRLL motif is present at residues 414 to 418 (LRRLL). Positions 430–444 (TPSTPLATRHPQSPL) are enriched in polar residues. Residues 430–451 (TPSTPLATRHPQSPLSADLPDE) form a disordered region. The ODD stretch occupies residues 452–581 (LPVGTENVHR…TLAQSSEDED (130 aa)). Residues 454–506 (VGTENVHRLFTSGKDTEAVETDLDIAQDADALDLEMLAPYISMDDDFQLNASE) are NTAD. Lysine 467 participates in a covalent cross-link: Glycyl lysine isopeptide (Lys-Gly) (interchain with G-Cter in ubiquitin). The LAPYISMD motif lies at 490–497 (LAPYISMD). Proline 492 is subject to 4-hydroxyproline. Disordered regions lie at residues 523-600 (RARS…SPEH) and 619-669 (APGS…AQAD). 2 stretches are compositionally biased toward low complexity: residues 530–541 (LSPPALEPSLLP) and 550–564 (SCSS…ASSP). Lysine 570 participates in a covalent cross-link: Glycyl lysine isopeptide (Lys-Gly) (interchain with G-Cter in ubiquitin). Low complexity predominate over residues 629-646 (PLLNLNEPLGLGPSLLSP).

In terms of assembly, isoform 2 interacts (via ODD domain) with VHL (via beta domain). Isoform 4 interacts with HIF1A; the interaction inhibits the binding of HIF1A to hypoxia-responsive element (HRE) and HIF1A/ARNT-dependent transcriptional activation. Isoform 4 interacts with ARNT; the interaction occurs in a HIF1A- and DNA-binding-independent manner and does not induce HIF1A/ARNT-dependent transcriptional activation. Isoform 4 interacts with EPAS1. Interacts with BAD, BCL2L2 and MCL1. In terms of processing, in normoxia, hydroxylated on Pro-492 in the oxygen-dependent degradation domain (ODD) by prolyl hydroxylase(s) (PHD). The hydroxylated proline promotes interaction with VHL, initiating rapid ubiquitination and subsequent proteasomal degradation. Post-translationally, ubiquitinated; ubiquitination occurs in a VHL- and oxygen-dependent pathway and subsequently targeted for proteasomal degradation. As to expression, expressed in vascular cells (at protein level). Expressed in kidney. Expressed in lung epithelial cells. Expressed in endothelial cells (venous and arterial cells from umbilical cord and aortic endothelial cells) and in vascular smooth muscle cells (aorta). Strongly expressed in the heart, placenta, and skeletal muscle, whereas a weak expression profile was found in the lung, liver, and kidney. Expressed weakly in cell renal cell carcinoma (CC-RCC) compared to normal renal cells. Expression is down-regulated in numerous kidney tumor cells compared to non tumor kidney tissues. Isoform 2 is expressed in heart, placenta, lung, liver, skeletal muscle and pancreas and in numerous cancer cell lines. Isoform 3 and isoform 4 are weakly expressed in heart, placenta, lung, liver, skeletal muscle and pancreas. Isoform 4 is expressed in fetal tissues, such as heart, brain, thymus, lung, liver, skeletal kidney and spleen. Isoform 3 is weakly expressed in fetal tissues, such as liver and kidney.

The protein localises to the nucleus. The protein resides in the cytoplasm. Its subcellular location is the nucleus speckle. It localises to the mitochondrion. Its function is as follows. Acts as a transcriptional regulator in adaptive response to low oxygen tension. Acts as a regulator of hypoxia-inducible gene expression. Functions as an inhibitor of angiogenesis in hypoxic cells of the cornea. Plays a role in the development of the cardiorespiratory system. May also be involved in apoptosis. Functionally, attenuates the ability of transcription factor HIF1A to bind to hypoxia-responsive elements (HRE) located within the enhancer/promoter of hypoxia-inducible target genes and hence inhibits HRE-driven transcriptional activation. Also inhibits hypoxia-inducible ARNT-mediated gene expression. Attenuates the ability of transcription factor HIF1A to bind to hypoxia-responsive elements (HRE) located within the enhancer/promoter of hypoxia-inducible target genes and hence inhibits HRE-driven transcriptional activation. In terms of biological role, attenuates the ability of transcription factor HIF1A and EPAS1/HIF2A to bind to hypoxia-responsive elements (HRE) located within the enhancer/promoter of hypoxia-inducible target genes and hence inhibits HRE-driven transcriptional activation. May act as a tumor suppressor and inhibits malignant cell transformation. This chain is Hypoxia-inducible factor 3-alpha, found in Homo sapiens (Human).